Reading from the N-terminus, the 210-residue chain is Protein GET1 (210 aa).

Over 1–4 (MPSL) the chain is Lumenal. A helical membrane pass occupies residues 5-24 (LIIVLIIHVVTYLINTIGAN). Topologically, residues 25-110 (TIDSLLWLLY…SFDLAVKSIR (86 aa)) are cytoplasmic. A coiled-coil region spans residues 39 to 95 (NQTSQTANEQRRLKREVMQLKREMNATSSQDEFAKWAKLRRRHDKTMEEYEAKNKAL). The chain crosses the membrane as a helical span at residues 111–131 (FFSTTGLKLFLQFWCSKTPIF). Over 132–155 (ELPRGWIPWQVEWVLSFPRAPLGT) the chain is Lumenal. Residues 156 to 172 (VSIQIWGGVCATVVSLA) form a helical membrane-spanning segment. The Cytoplasmic segment spans residues 173–210 (GDAIGVVNVYLTSKAPKQKEPATSGENSARPMAIKKEL). The tract at residues 189-210 (KQKEPATSGENSARPMAIKKEL) is disordered.

This sequence belongs to the WRB/GET1 family. In terms of assembly, interacts with GET3.

It localises to the endoplasmic reticulum membrane. Required for the post-translational delivery of tail-anchored (TA) proteins to the endoplasmic reticulum. Acts as a membrane receptor for soluble GET3, which recognizes and selectively binds the transmembrane domain of TA proteins in the cytosol. This is Protein GET1 from Coccidioides immitis (strain RS) (Valley fever fungus).